Consider the following 316-residue polypeptide: Phosphate acetyltransferase (316 aa).

The protein belongs to the phosphate acetyltransferase and butyryltransferase family.

The protein resides in the cytoplasm. It catalyses the reaction acetyl-CoA + phosphate = acetyl phosphate + CoA. It participates in metabolic intermediate biosynthesis; acetyl-CoA biosynthesis; acetyl-CoA from acetate: step 2/2. The protein is Phosphate acetyltransferase (pta) of Rhizobium meliloti (Ensifer meliloti).